Consider the following 121-residue polypeptide: Protein MGF 110-14L (121 aa).

An N-terminal signal peptide occupies residues 1–17; sequence MKVLLGLLLGYSVLILA.

It belongs to the asfivirus MGF 110 family.

The sequence is that of Protein MGF 110-14L from African swine fever virus (isolate Portugal/Lis 57/1957) (ASFV).